A 244-amino-acid polypeptide reads, in one-letter code: Uridylate kinase (244 aa).

Residue 18–21 coordinates ATP; sequence KVSG. Residue glycine 60 coordinates UMP. Residues glycine 61 and arginine 65 each contribute to the ATP site. UMP-binding positions include aspartate 80 and 141 to 148; that span reads TGNPFCTT. ATP is bound by residues threonine 168, glutamine 169, tyrosine 174, and aspartate 177.

Belongs to the UMP kinase family. As to quaternary structure, homohexamer.

It is found in the cytoplasm. It carries out the reaction UMP + ATP = UDP + ADP. It participates in pyrimidine metabolism; CTP biosynthesis via de novo pathway; UDP from UMP (UMPK route): step 1/1. Inhibited by UTP. In terms of biological role, catalyzes the reversible phosphorylation of UMP to UDP. The polypeptide is Uridylate kinase (Rickettsia typhi (strain ATCC VR-144 / Wilmington)).